The sequence spans 320 residues: RNA-binding protein Musashi homolog 1 (320 aa).

Residues 1-14 are compositionally biased toward low complexity; that stretch reads MTTTVSTGATAVAT. The interval 1–48 is disordered; it reads MTTTVSTGATAVATLRETSPPVDGHEEARLNADSDDGSHGSQDPGKMF. Threonine 18 carries the post-translational modification Phosphothreonine. A phosphoserine mark is found at serine 19 and serine 34. Basic and acidic residues predominate over residues 23 to 38; the sequence is DGHEEARLNADSDDGS. RRM domains lie at 45 to 124 and 134 to 211; these read GKMF…FPKR and KKVF…KAQP. Required for binding to target mRNAs stretches follow at residues 88–93 and 177–182; these read FGFITF and FGFVTF.

It belongs to the Musashi family. Expressed in the gut and in AVA, AFD, RMD, RMED, RMEV, RMER and RMEL neurons (at protein level). In the tail expressed in neurons and all the ray sensilla. Expressed in male specific C1-C4 neurons.

It is found in the cytoplasm. The protein resides in the perikaryon. In terms of biological role, RNA binding protein that regulates the expression of target mRNAs at the translation level. Binds RNA containing the 5'-[GA]U(1-3)AGU-3' motif located in the 3' UTR of the target mRNA. Binds to the mRNA of three Arp2/3 complex components arx-1, arx-2 and arx-3 and negatively regulates their translation during association learning. Plays a role in time-dependent memory loss and the retention of conditioned behavior over time, probably through negative regulation of the Arp2/3 actin cytoskeleton branching complex and regulation of synapse size. Required for two aspects of male mating behavior: turning around the hermaphrodite head or tail and vulva location. The chain is RNA-binding protein Musashi homolog 1 from Caenorhabditis elegans.